We begin with the raw amino-acid sequence, 203 residues long: Orotate phosphoribosyltransferase (203 aa).

Residues Arg94, Lys98, His100, and 120-128 (EDLISTGGS) each bind 5-phospho-alpha-D-ribose 1-diphosphate. Ser124 lines the orotate pocket.

This sequence belongs to the purine/pyrimidine phosphoribosyltransferase family. PyrE subfamily. Homodimer. It depends on Mg(2+) as a cofactor.

The enzyme catalyses orotidine 5'-phosphate + diphosphate = orotate + 5-phospho-alpha-D-ribose 1-diphosphate. The protein operates within pyrimidine metabolism; UMP biosynthesis via de novo pathway; UMP from orotate: step 1/2. Its function is as follows. Catalyzes the transfer of a ribosyl phosphate group from 5-phosphoribose 1-diphosphate to orotate, leading to the formation of orotidine monophosphate (OMP). The polypeptide is Orotate phosphoribosyltransferase (Staphylococcus aureus (strain Mu50 / ATCC 700699)).